We begin with the raw amino-acid sequence, 159 residues long: 2-C-methyl-D-erythritol 2,4-cyclodiphosphate synthase (159 aa).

A divalent metal cation is bound by residues Asp10 and His12. 4-CDP-2-C-methyl-D-erythritol 2-phosphate-binding positions include 10 to 12 and 36 to 37; these read DVH and HS. Residue His44 coordinates a divalent metal cation. 4-CDP-2-C-methyl-D-erythritol 2-phosphate-binding positions include 58-60, 134-137, Phe141, and Arg144; these read DIG and TTSE.

Belongs to the IspF family. Homotrimer. A divalent metal cation serves as cofactor.

The catalysed reaction is 4-CDP-2-C-methyl-D-erythritol 2-phosphate = 2-C-methyl-D-erythritol 2,4-cyclic diphosphate + CMP. It functions in the pathway isoprenoid biosynthesis; isopentenyl diphosphate biosynthesis via DXP pathway; isopentenyl diphosphate from 1-deoxy-D-xylulose 5-phosphate: step 4/6. Its function is as follows. Involved in the biosynthesis of isopentenyl diphosphate (IPP) and dimethylallyl diphosphate (DMAPP), two major building blocks of isoprenoid compounds. Catalyzes the conversion of 4-diphosphocytidyl-2-C-methyl-D-erythritol 2-phosphate (CDP-ME2P) to 2-C-methyl-D-erythritol 2,4-cyclodiphosphate (ME-CPP) with a corresponding release of cytidine 5-monophosphate (CMP). The protein is 2-C-methyl-D-erythritol 2,4-cyclodiphosphate synthase of Cereibacter sphaeroides (strain ATCC 17025 / ATH 2.4.3) (Rhodobacter sphaeroides).